Reading from the N-terminus, the 346-residue chain is Nicotinate-nucleotide--dimethylbenzimidazole phosphoribosyltransferase (346 aa).

Glu312 (proton acceptor) is an active-site residue.

Belongs to the CobT family.

It catalyses the reaction 5,6-dimethylbenzimidazole + nicotinate beta-D-ribonucleotide = alpha-ribazole 5'-phosphate + nicotinate + H(+). It participates in nucleoside biosynthesis; alpha-ribazole biosynthesis; alpha-ribazole from 5,6-dimethylbenzimidazole: step 1/2. Catalyzes the synthesis of alpha-ribazole-5'-phosphate from nicotinate mononucleotide (NAMN) and 5,6-dimethylbenzimidazole (DMB). The sequence is that of Nicotinate-nucleotide--dimethylbenzimidazole phosphoribosyltransferase from Cupriavidus taiwanensis (strain DSM 17343 / BCRC 17206 / CCUG 44338 / CIP 107171 / LMG 19424 / R1) (Ralstonia taiwanensis (strain LMG 19424)).